The chain runs to 59 residues: Large ribosomal subunit protein bL32 (59 aa).

The protein belongs to the bacterial ribosomal protein bL32 family.

The polypeptide is Large ribosomal subunit protein bL32 (Mycoplasma capricolum subsp. capricolum (strain California kid / ATCC 27343 / NCTC 10154)).